The sequence spans 189 residues: Cytochrome b6-f complex subunit 4 (189 aa).

3 helical membrane-spanning segments follow: residues 36–56 (LSYI…GLAV), 103–123 (LLGV…PFLE), and 139–159 (TVSL…ALPI).

It belongs to the cytochrome b family. PetD subfamily. In terms of assembly, the 4 large subunits of the cytochrome b6-f complex are cytochrome b6, subunit IV (17 kDa polypeptide, petD), cytochrome f and the Rieske protein, while the 4 small subunits are petG, petL, petM and petN. The complex functions as a dimer.

The protein resides in the plastid. The protein localises to the chloroplast thylakoid membrane. Functionally, component of the cytochrome b6-f complex, which mediates electron transfer between photosystem II (PSII) and photosystem I (PSI), cyclic electron flow around PSI, and state transitions. The sequence is that of Cytochrome b6-f complex subunit 4 from Pinus koraiensis (Korean pine).